We begin with the raw amino-acid sequence, 382 residues long: Lipoyl synthase, mitochondrial (382 aa).

A mitochondrion-targeting transit peptide spans 1–30 (MHGRRHLAASLARALTYAPSRSISSTPSLL). Residues 25-34 (STPSLLQTLD) are compositionally biased toward polar residues. The interval 25–47 (STPSLLQTLDPSTPSPAAAPPTA) is disordered. The [4Fe-4S] cluster site is built by Cys-112, Cys-117, Cys-123, Cys-143, Cys-147, Cys-150, and Ser-359. One can recognise a Radical SAM core domain in the interval 128–348 (ETGTATATIM…RSLGVDMGFR (221 aa)).

This sequence belongs to the radical SAM superfamily. Lipoyl synthase family. It depends on [4Fe-4S] cluster as a cofactor.

The protein localises to the mitochondrion. It catalyses the reaction [[Fe-S] cluster scaffold protein carrying a second [4Fe-4S](2+) cluster] + N(6)-octanoyl-L-lysyl-[protein] + 2 oxidized [2Fe-2S]-[ferredoxin] + 2 S-adenosyl-L-methionine + 4 H(+) = [[Fe-S] cluster scaffold protein] + N(6)-[(R)-dihydrolipoyl]-L-lysyl-[protein] + 4 Fe(3+) + 2 hydrogen sulfide + 2 5'-deoxyadenosine + 2 L-methionine + 2 reduced [2Fe-2S]-[ferredoxin]. It participates in protein modification; protein lipoylation via endogenous pathway; protein N(6)-(lipoyl)lysine from octanoyl-[acyl-carrier-protein]: step 2/2. Functionally, catalyzes the radical-mediated insertion of two sulfur atoms into the C-6 and C-8 positions of the octanoyl moiety bound to the lipoyl domains of lipoate-dependent enzymes, thereby converting the octanoylated domains into lipoylated derivatives. The sequence is that of Lipoyl synthase, mitochondrial from Oryza sativa subsp. indica (Rice).